The following is a 591-amino-acid chain: Thiol:disulfide interchange protein DsbD 1 (591 aa).

Residues 1-18 form the signal peptide; it reads MRRLLTLILLLVALPAGA. The Periplasmic segment spans residues 19-175; the sequence is GLFDSRPGAS…GPLEHKGKRS (157 aa). 2 disulfide bridges follow: cysteine 134–cysteine 140 and cysteine 191–cysteine 313. The chain crosses the membrane as a helical span at residues 176–196; it reads LLFFFLAGLTLTFTPCVLPML. At 197–213 the chain is on the cytoplasmic side; sequence PILSGVVLRGRPGGGRG. A helical membrane pass occupies residues 214–234; sequence FVLSLAYVLPMALCFALLGAL. At 235-251 the chain is on the periplasmic side; sequence MGMFGASLNLQAQLQSP. The chain crosses the membrane as a helical span at residues 252-272; it reads WVLVPFAAFFALFAVAMFGFF. Residues 273–295 are Cytoplasmic-facing; the sequence is ELRLPGFIREPLDRLAGDARGGS. A helical membrane pass occupies residues 296 to 316; that stretch reads ILGAATLGVLSSLLVSPCVSA. The Periplasmic segment spans residues 317-338; it reads PLAASLLYISASGDAWGGGLQL. The helical transmembrane segment at 339-359 threads the bilayer; the sequence is FALGLGMGTPLVVFGAGGGAL. The Cytoplasmic portion of the chain corresponds to 360–365; that stretch reads LPKSGA. Residues 366-386 traverse the membrane as a helical segment; that stretch reads WMNGVRNAFGVLLLAVAVWLL. Residues 387–392 lie on the Periplasmic side of the membrane; sequence ERVVSG. The chain crosses the membrane as a helical span at residues 393 to 413; the sequence is PVALMLWGMLAGGAGLALGAL. The Cytoplasmic segment spans residues 414-423; it reads EFTPKSAARR. A helical membrane pass occupies residues 424–444; sequence LLQLLGLMFLTYAVAAWIGAL. At 445-591 the chain is on the periplasmic side; the sequence is QGESDPIHPL…ERLRRAATRQ (147 aa). The 138-residue stretch at 452 to 589 folds into the Thioredoxin domain; the sequence is HPLGRSVPSI…LAERLRRAAT (138 aa). Cysteine 504 and cysteine 507 are disulfide-bonded.

The protein belongs to the thioredoxin family. DsbD subfamily.

It is found in the cell inner membrane. It carries out the reaction [protein]-dithiol + NAD(+) = [protein]-disulfide + NADH + H(+). The catalysed reaction is [protein]-dithiol + NADP(+) = [protein]-disulfide + NADPH + H(+). Required to facilitate the formation of correct disulfide bonds in some periplasmic proteins and for the assembly of the periplasmic c-type cytochromes. Acts by transferring electrons from cytoplasmic thioredoxin to the periplasm. This transfer involves a cascade of disulfide bond formation and reduction steps. This is Thiol:disulfide interchange protein DsbD 1 from Pseudomonas aeruginosa (strain ATCC 15692 / DSM 22644 / CIP 104116 / JCM 14847 / LMG 12228 / 1C / PRS 101 / PAO1).